A 705-amino-acid chain; its full sequence is FAD-dependent monooxygenase ATEG_03635 (705 aa).

FAD is bound by residues 86–115 (DVLICGAGPFGLELGLILARQGISFRIVDK), valine 208, 308–310 (RFY), and serine 408.

The protein belongs to the PheA/TfdB FAD monooxygenase family. The cofactor is FAD.

It functions in the pathway secondary metabolite biosynthesis. FAD-dependent monooxygenase; part of the cluster A that mediates the biosynthesis of azasperpyranones, members of the azaphilone family that exhibit anti-cancer activities. Azasperpyranones are synthesized by 2 clusters, A and B. Cluster A is responsible for the production of the polyhydric phenol moiety while the azaphilonoid scaffold is produced by the cluster B. The non-reducing polyketide synthase ATEG_03629 produces 5-methyl orsellinic acid, which is then reduced to 5-methyl orsellinic aldehyde by the NRPS-like protein ATEG_03630. 5-methyl orsellinic aldehyde is then first hydroxylated by the FAD-dependent monooxygenase ATEG_03635 and subsequently hydroxylated by the cytochrome P450 monooxygenase ATEG_03631 to produce the unstable polyhydric phenol precursor of azasperpyranones. On the other hand, the polyketide synthase ATEG_07659 is responsible for producing the 3,5-dimethyloctadienone moiety from acetyl-CoA, three malonyl-CoA, and two S-adenosyl methionines (SAM). The 3,5-dimethyloctadienone moiety is then loaded onto the SAT domain of ATEG_07661 and extended with four malonyl-CoA and one SAM, which leads to the formation of 2,4-dihydroxy-6-(5,7-dimethyl-2-oxo-trans-3-trans-5-nonadienyl)-3-methylbenzaldehyde (compound 8) after reductive release and aldol condensation. The FAD-dependent monooxygenase ATEG_07662 is the next enzyme in the biosynthesis sequence and hydroxylates the side chain at the benzylic position of compound 8. In Aspergillus nidulans, afoF, the ortholog of the FAD-dependent oxygenase ATEG_07660, is the key enzyme for the biosynthesis of asperfuranone by catalyzing the hydroxylation at C-8 of to prevent the formation of a six-membered ring hemiacetal intermediate and thus facilitating the formation of a five-membered ring to produce asperfuranone. In Aspergillus terreus, ATEG_07660 is probably not functional, which leads to the formation of the six-membered ring hemiacetal intermediate presperpyranone instead of asperfuranone. Finally, ATEG_03636 is involved in the condensation of the polyhydric phenol moiety produced by cluster A and the perasperpyranone precursor produced by cluster B, to yield azasperpyranone A. Further modifications of azasperpyranone A result in the production of derivatives, including azasperpyranone B to F. The chain is FAD-dependent monooxygenase ATEG_03635 from Aspergillus terreus (strain NIH 2624 / FGSC A1156).